The chain runs to 378 residues: Glutamate 5-kinase (378 aa).

Residue Lys-14 participates in ATP binding. Substrate contacts are provided by Ser-54, Asp-141, and Asn-153. 173-174 serves as a coordination point for ATP; that stretch reads SD. The PUA domain occupies 279-356; sequence AGRLTVDAGA…DEISEILGYD (78 aa).

Belongs to the glutamate 5-kinase family.

It localises to the cytoplasm. The enzyme catalyses L-glutamate + ATP = L-glutamyl 5-phosphate + ADP. It functions in the pathway amino-acid biosynthesis; L-proline biosynthesis; L-glutamate 5-semialdehyde from L-glutamate: step 1/2. In terms of biological role, catalyzes the transfer of a phosphate group to glutamate to form L-glutamate 5-phosphate. The polypeptide is Glutamate 5-kinase (Brucella anthropi (strain ATCC 49188 / DSM 6882 / CCUG 24695 / JCM 21032 / LMG 3331 / NBRC 15819 / NCTC 12168 / Alc 37) (Ochrobactrum anthropi)).